The primary structure comprises 128 residues: Large ribosomal subunit protein bL12c (128 aa).

The protein belongs to the bacterial ribosomal protein bL12 family. As to quaternary structure, homodimer. Part of the ribosomal stalk of the 50S ribosomal subunit. Forms a multimeric L10(L12)X complex, where L10 forms an elongated spine to which 2 to 4 L12 dimers bind in a sequential fashion. Binds GTP-bound translation factors.

It localises to the plastid. Its subcellular location is the chloroplast. Functionally, forms part of the ribosomal stalk which helps the ribosome interact with GTP-bound translation factors. Is thus essential for accurate translation. The chain is Large ribosomal subunit protein bL12c from Phaeodactylum tricornutum (strain CCAP 1055/1).